A 308-amino-acid chain; its full sequence is Cyclopropane mycolic acid synthase 2 (308 aa).

S-adenosyl-L-methionine contacts are provided by residues 44–45 (YS), 79–87 (LLDIGCGWG), 105–110 (TLSANQ), and 137–138 (WE). C290 is a catalytic residue.

This sequence belongs to the CFA/CMAS family. Homodimer.

It localises to the cytoplasm. It catalyses the reaction a 1-acyl-2-(9Z)-enoyl-sn-glycero-3-phospholipid + S-adenosyl-L-methionine = a 1-acyl-2-(9-cyclopronane)-acyl-sn-glycero-3-phospholipid + S-adenosyl-L-homocysteine + H(+). It participates in lipid metabolism; mycolic acid biosynthesis. Its function is as follows. Catalyzes the formation of trans cyclopropanated ketomycolate or methoxymycolate through the conversion of a double bond to a cyclopropane ring at the proximal position of an oxygenated mycolic acid via the transfer of a methylene group from S-adenosyl-L-methionine. In the absence of MmaA2, CmaA2 has a non-specific cis-cyclopropanating activity and is able to catalyze the conversion of a double bond to a cis cyclopropane ring at the distal position of an alpha mycolic acid. Cyclopropanated mycolic acids are key factors participating in cell envelope permeability, host immunomodulation and persistence. The sequence is that of Cyclopropane mycolic acid synthase 2 (cmaA2) from Mycobacterium leprae (strain TN).